The following is a 674-amino-acid chain: Putative kinase-like protein TMKL1 (674 aa).

The first 25 residues, 1–25, serve as a signal peptide directing secretion; it reads MGMEALRFLHVIFFFVLILHCHCGT. Topologically, residues 26 to 295 are extracellular; it reads SLSGSSDVKL…PLKPCLGSSR (270 aa). Residues asparagine 57, asparagine 90, asparagine 95, and asparagine 110 are each glycosylated (N-linked (GlcNAc...) asparagine). LRR repeat units follow at residues 100-122, 124-146, 148-169, and 173-194; these read HLLS…IGEF, MLQS…LGYT, SLSD…SIWN, and KLVS…PALP. Residues asparagine 183 and asparagine 195 are each glycosylated (N-linked (GlcNAc...) asparagine). LRR repeat units follow at residues 200–222, 224–244, and 247–269; these read NLQV…ITRF, GVKS…EGLG, and ELES…GESK. Asparagine 252 and asparagine 257 each carry an N-linked (GlcNAc...) asparagine glycan. Residues 296-323 form a helical membrane-spanning segment; that stretch reads LSPGAVAGLVIGLMSGAVVVASLLIGYL. Over 324–674 the chain is Cytoplasmic; it reads QNKKRKSSIE…ETRSDAETPF (351 aa). The tract at residues 331-350 is disordered; sequence SIESEDDLEEGDEEDEIGEK. Positions 333-348 are enriched in acidic residues; the sequence is ESEDDLEEGDEEDEIG. At serine 334 the chain carries Phosphoserine. In terms of domain architecture, Protein kinase spans 373–674; sequence NATGQVMEKT…ETRSDAETPF (302 aa). A Phosphothreonine modification is found at threonine 375. Serine 454 is modified (phosphoserine). Residues 649–674 are disordered; that stretch reads LEENRPRNRSALYSPTETRSDAETPF.

This sequence belongs to the protein kinase superfamily.

It localises to the membrane. Does not seem to have conserved a kinase activity. In Arabidopsis thaliana (Mouse-ear cress), this protein is Putative kinase-like protein TMKL1 (TMKL1).